Here is a 196-residue protein sequence, read N- to C-terminus: Probable nicotinate-nucleotide adenylyltransferase (196 aa).

It belongs to the NadD family.

The catalysed reaction is nicotinate beta-D-ribonucleotide + ATP + H(+) = deamido-NAD(+) + diphosphate. It functions in the pathway cofactor biosynthesis; NAD(+) biosynthesis; deamido-NAD(+) from nicotinate D-ribonucleotide: step 1/1. Functionally, catalyzes the reversible adenylation of nicotinate mononucleotide (NaMN) to nicotinic acid adenine dinucleotide (NaAD). This chain is Probable nicotinate-nucleotide adenylyltransferase, found in Caldicellulosiruptor bescii (strain ATCC BAA-1888 / DSM 6725 / KCTC 15123 / Z-1320) (Anaerocellum thermophilum).